Here is a 283-residue protein sequence, read N- to C-terminus: Small aggregate formation protein (283 aa).

The protein resides in the cytoplasm. Its function is as follows. Knockout of the gene for this protein causes small aggregate formation. May regulate the secretion or processing of a secreted factor that regulates aggregate size. This chain is Small aggregate formation protein (smlA), found in Dictyostelium discoideum (Social amoeba).